We begin with the raw amino-acid sequence, 396 residues long: Peptide chain release factor 1, mitochondrial (396 aa).

The residue at position 268 (Q268) is an N5-methylglutamine. A disordered region spans residues 317–340 (LEKEEKERNARKDQVSTTDRSDKI).

Belongs to the prokaryotic/mitochondrial release factor family. Methylation of glutamine in the GGQ triplet is conserved from bacteria to mammals.

Its subcellular location is the mitochondrion. Mitochondrial peptide chain release factor that directs the termination of translation in response to the peptide chain termination codons UAA and UAG. This chain is Peptide chain release factor 1, mitochondrial (MRF1), found in Kluyveromyces lactis (strain ATCC 8585 / CBS 2359 / DSM 70799 / NBRC 1267 / NRRL Y-1140 / WM37) (Yeast).